The primary structure comprises 227 residues: Triosephosphate isomerase (227 aa).

9–11 contributes to the substrate binding site; that stretch reads NFK. Catalysis depends on H93, which acts as the Electrophile. E141 (proton acceptor) is an active-site residue. Substrate-binding positions include I146, G180, and 201-202; that span reads AS.

The protein belongs to the triosephosphate isomerase family. In terms of assembly, homotetramer; dimer of dimers.

Its subcellular location is the cytoplasm. The catalysed reaction is D-glyceraldehyde 3-phosphate = dihydroxyacetone phosphate. It participates in carbohydrate biosynthesis; gluconeogenesis. It functions in the pathway carbohydrate degradation; glycolysis; D-glyceraldehyde 3-phosphate from glycerone phosphate: step 1/1. Involved in the gluconeogenesis. Catalyzes stereospecifically the conversion of dihydroxyacetone phosphate (DHAP) to D-glyceraldehyde-3-phosphate (G3P). This is Triosephosphate isomerase from Saccharolobus solfataricus (strain ATCC 35092 / DSM 1617 / JCM 11322 / P2) (Sulfolobus solfataricus).